The primary structure comprises 430 residues: Histidine--tRNA ligase (430 aa).

This sequence belongs to the class-II aminoacyl-tRNA synthetase family. As to quaternary structure, homodimer.

Its subcellular location is the cytoplasm. It catalyses the reaction tRNA(His) + L-histidine + ATP = L-histidyl-tRNA(His) + AMP + diphosphate + H(+). This is Histidine--tRNA ligase from Acinetobacter baumannii (strain AB307-0294).